Here is a 911-residue protein sequence, read N- to C-terminus: Alpha-actinin-4 (911 aa).

Residues 1 to 269 form an actin-binding region; that stretch reads MVDYHAANQS…YVSSFYHAFS (269 aa). The interaction with VCL stretch occupies residues 12-26; that stretch reads QYGPSSAGNGAGGGG. Residue Tyr-31 is modified to Phosphotyrosine. The tract at residues 40–61 is interaction with VCL; it reads RDLLLDPAWEKQQRKTFTAWCN. Calponin-homology (CH) domains lie at 50-154 and 163-269; these read KQQR…LRFA and TSAK…HAFS. The LXXLL motif signature appears at 84 to 88; it reads LMLLL. The interval 108 to 126 is interaction with VCL; sequence KINNVNKALDFIASKGVKL. An N6-acetyllysine modification is found at Lys-114. The tract at residues 177 to 192 is polyphosphoinositide (PIP2)-binding; sequence TAPYKNVNVQNFHISW. Lys-214 is subject to N6-acetyllysine. Thr-249 carries the phosphothreonine modification. Spectrin repeat units follow at residues 293 to 403, 413 to 518, 528 to 639, and 649 to 752; these read HLME…WLLN, HLAE…ALEK, QLHL…ALLE, and HLRR…EVEN. N6-acetyllysine occurs at positions 592 and 625. A Phosphoserine modification is found at Ser-696. The segment at 736-911 is mediates interaction with MICALL2; the sequence is WEQLLTTIAR…STALYGESDL (176 aa). EF-hand domains follow at residues 765-800 and 806-841; these read EQMQ…LGYD and QGEA…ETTD. Asp-778 contributes to the Ca(2+) binding site. Lys-779 bears the N6-acetyllysine mark. 2 residues coordinate Ca(2+): Asp-780 and Glu-789. The residue at position 859 (Lys-859) is an N6-acetyllysine. Ser-909 carries the post-translational modification Phosphoserine.

This sequence belongs to the alpha-actinin family. As to quaternary structure, homodimer; antiparallel. Binds TRIM3 at the N-terminus. Interacts with MICALL2 (preferentially in opened conformation); stimulated by RAB13 activation. Identified in a complex with CASK, IQGAP1, MAGI2, NPHS1, SPTAN1 and SPTBN1. Identified in a IGF2BP1-dependent mRNP granule complex containing untranslated mRNAs. Component of the CART complex, at least composed of ACTN4, HGS/HRS, MYO5B and TRIM3. Interacts with MAGI1. Interacts with PDLIM2. Interacts with PPARG and RARA. Binds to VCL; this interaction triggers VCL conformational changes. Interacts with SEPTIN14. Interacts with IGSF8. In terms of tissue distribution, widely expressed.

It is found in the nucleus. The protein localises to the cytoplasm. Its subcellular location is the cell junction. The protein resides in the cytoskeleton. It localises to the stress fiber. It is found in the perinuclear region. In terms of biological role, F-actin cross-linking protein which is thought to anchor actin to a variety of intracellular structures. This is a bundling protein. Probably involved in vesicular trafficking via its association with the CART complex. The CART complex is necessary for efficient transferrin receptor recycling but not for EGFR degradation. Involved in tight junction assembly in epithelial cells probably through interaction with MICALL2. Links MICALL2 to the actin cytoskeleton and recruits it to the tight junctions. May also function as a transcriptional coactivator, stimulating transcription mediated by the nuclear hormone receptors PPARG and RARA. Association with IGSF8 regulates the immune synapse formation and is required for efficient T-cell activation. This Homo sapiens (Human) protein is Alpha-actinin-4.